The following is a 495-amino-acid chain: Serine/threonine-protein kinase F (495 aa).

The region spanning 46 to 314 (YLPVKLLGQG…ASAEEVLAVL (269 aa)) is the Protein kinase domain. ATP is bound by residues 52 to 60 (LGQGGFGAA) and lysine 77. The Proton acceptor role is filled by aspartate 187. Positions 316–354 (GGKGNQGKAPPGATVSTPQGTNTQIQPTPASSASPLTAP) are disordered. The span at 329–350 (TVSTPQGTNTQIQPTPASSASP) shows a compositional bias: polar residues.

This sequence belongs to the protein kinase superfamily. Ser/Thr protein kinase family.

The catalysed reaction is L-seryl-[protein] + ATP = O-phospho-L-seryl-[protein] + ADP + H(+). It catalyses the reaction L-threonyl-[protein] + ATP = O-phospho-L-threonyl-[protein] + ADP + H(+). The protein is Serine/threonine-protein kinase F (spkF) of Synechocystis sp. (strain ATCC 27184 / PCC 6803 / Kazusa).